A 189-amino-acid polypeptide reads, in one-letter code: MSSESTAIFTPIIDALHNQQVIAYPTEAVFGLGCDPDSEQAVNALLALKQRPWEKGLILIAADYAQLTPYIDDTALNEQQRATMFASWPGPVTWVIPARSETSRLLTGRFNSLAVRVSDHPLVQQLCRQFGKPLVSTSANLSGQEPCRSADEVQQQFGAAFPLLAGSVGGRLNPSEIRDVLTGEQIRQG.

Residues 6–189 (TAIFTPIIDA…VLTGEQIRQG (184 aa)) enclose the YrdC-like domain.

The protein belongs to the SUA5 family. TsaC subfamily.

The protein resides in the cytoplasm. The catalysed reaction is L-threonine + hydrogencarbonate + ATP = L-threonylcarbamoyladenylate + diphosphate + H2O. Required for the formation of a threonylcarbamoyl group on adenosine at position 37 (t(6)A37) in tRNAs that read codons beginning with adenine. Catalyzes the conversion of L-threonine, HCO(3)(-)/CO(2) and ATP to give threonylcarbamoyl-AMP (TC-AMP) as the acyladenylate intermediate, with the release of diphosphate. This Serratia proteamaculans (strain 568) protein is Threonylcarbamoyl-AMP synthase.